The sequence spans 385 residues: 8-amino-7-oxononanoate synthase (385 aa).

A substrate-binding site is contributed by Arg21. 108–109 (GF) is a pyridoxal 5'-phosphate binding site. His133 lines the substrate pocket. Residues Ser179, His207, and Thr233 each coordinate pyridoxal 5'-phosphate. Lys236 bears the N6-(pyridoxal phosphate)lysine mark. Thr352 lines the substrate pocket.

The protein belongs to the class-II pyridoxal-phosphate-dependent aminotransferase family. BioF subfamily. In terms of assembly, homodimer. Pyridoxal 5'-phosphate serves as cofactor.

The catalysed reaction is 6-carboxyhexanoyl-[ACP] + L-alanine + H(+) = (8S)-8-amino-7-oxononanoate + holo-[ACP] + CO2. It participates in cofactor biosynthesis; biotin biosynthesis. Functionally, catalyzes the decarboxylative condensation of pimeloyl-[acyl-carrier protein] and L-alanine to produce 8-amino-7-oxononanoate (AON), [acyl-carrier protein], and carbon dioxide. This is 8-amino-7-oxononanoate synthase from Pseudescherichia vulneris (Escherichia vulneris).